The sequence spans 90 residues: RNA-binding protein Hfq (90 aa).

Residues 10 to 70 (DGFLNLLRRE…LSTITPARPL (61 aa)) enclose the Sm domain.

The protein belongs to the Hfq family. Homohexamer.

Functionally, RNA chaperone that binds small regulatory RNA (sRNAs) and mRNAs to facilitate mRNA translational regulation in response to envelope stress, environmental stress and changes in metabolite concentrations. Also binds with high specificity to tRNAs. This Symbiobacterium thermophilum (strain DSM 24528 / JCM 14929 / IAM 14863 / T) protein is RNA-binding protein Hfq.